The sequence spans 376 residues: 26S proteasome non-ATPase regulatory subunit 4 (376 aa).

In terms of domain architecture, VWFA spans 5–188 (STMVCVDNSE…LADALISSPI (184 aa)). Lys122 is covalently cross-linked (Glycyl lysine isopeptide (Lys-Gly) (interchain with G-Cter in SUMO2)). The segment at 197–262 (LGLGASDFEF…TEDSDDALLK (66 aa)) is interaction with UBQLN1. The region spanning 211–230 (SADPELALALRVSMEEQRQR) is the UIM 1 domain. A compositionally biased stretch (basic and acidic residues) spans 224–237 (MEEQRQRQEEEARR). The interval 224–257 (MEEQRQRQEEEARRAAAASAAEAGIATPGTEDSD) is disordered. Phosphothreonine occurs at positions 250 and 253. 2 positions are modified to phosphoserine: Ser256 and Ala259. Positions 282–301 (TEEEQIAYAMQMSLQGTEFS) constitute a UIM 2 domain. The disordered stretch occupies residues 355–376 (MGALASQATKDGKNDKKEEEKK). Residue Ser360 is modified to Phosphoserine. A compositionally biased stretch (basic and acidic residues) spans 364 to 376 (KDGKNDKKEEEKK).

This sequence belongs to the proteasome subunit S5A family. Component of the 19S proteasome regulatory particle complex. The 26S proteasome consists of a 20S core particle (CP) and two 19S regulatory subunits (RP). The regulatory particle is made of a lid composed of 9 subunits, a base containing 6 ATPases and few additional components including PSMD4. Interacts with NUB1. Interacts with SQSTM1. Interacts with UBQLN4. Interacts with UBE3A. Interacts with UBQLN1 (via ubiquitin-like domain). Interacts with DDI2. As to expression, isoform Rpn10A is ubiquitous whereas isoform Rpn10E is mostly expressed in the embryonic brain.

Functionally, component of the 26S proteasome, a multiprotein complex involved in the ATP-dependent degradation of ubiquitinated proteins. This complex plays a key role in the maintenance of protein homeostasis by removing misfolded or damaged proteins, which could impair cellular functions, and by removing proteins whose functions are no longer required. Therefore, the proteasome participates in numerous cellular processes, including cell cycle progression, apoptosis, or DNA damage repair. PSMD4 acts as an ubiquitin receptor subunit through ubiquitin-interacting motifs and selects ubiquitin-conjugates for destruction. Displays a preferred selectivity for longer polyubiquitin chains. This Mus musculus (Mouse) protein is 26S proteasome non-ATPase regulatory subunit 4 (Psmd4).